The primary structure comprises 2267 residues: Acetyl-CoA carboxylase 1 (2267 aa).

The region spanning 38–544 (PIHSVLVANN…HTGWLDSRIA (507 aa)) is the Biotin carboxylation domain. The region spanning 190-384 (PESCNSIPEE…AAQVVVGMGV (195 aa)) is the ATP-grasp domain. ATP is bound at residue 216-273 (CQVVGYPAMIKASWGGGGKGIRKVHNDDEVRALFKQVQGEVPGSPIFIMKVASQSRHL). Mg(2+) contacts are provided by Glu339, Glu353, and Asn355. Residues Glu339, Glu353, and Asn355 each contribute to the Mn(2+) site. The active site involves Arg357. The Biotinyl-binding domain maps to 671–745 (LQKEHDPSKL…QAADLIARLD (75 aa)). Lys712 bears the N6-biotinyllysine mark. In terms of domain architecture, CoA carboxyltransferase N-terminal spans 1502 to 1843 (PYKPLDAIDL…YVGGPLPIMK (342 aa)). The segment at 1502 to 2163 (PYKPLDAIDL…EDALAKEIRE (662 aa)) is carboxyltransferase. CoA-binding residues include Arg1752, Lys2053, and Arg2055. A CoA carboxyltransferase C-terminal domain is found at 1847 to 2163 (PPDRPVTYFP…EDALAKEIRE (317 aa)).

As to quaternary structure, homodimer. Mg(2+) serves as cofactor. Requires Mn(2+) as cofactor. It depends on biotin as a cofactor.

The protein resides in the cytoplasm. The protein localises to the cytosol. The enzyme catalyses hydrogencarbonate + acetyl-CoA + ATP = malonyl-CoA + ADP + phosphate + H(+). It carries out the reaction N(6)-biotinyl-L-lysyl-[protein] + hydrogencarbonate + ATP = N(6)-carboxybiotinyl-L-lysyl-[protein] + ADP + phosphate + H(+). Its pathway is lipid metabolism; malonyl-CoA biosynthesis; malonyl-CoA from acetyl-CoA: step 1/1. Multifunctional enzyme that catalyzes the carboxylation of acetyl-CoA, forming malonyl-CoA, which is used in the plastid for fatty acid synthesis and in the cytosol in various biosynthetic pathways including fatty acid elongation. This Oryza sativa subsp. japonica (Rice) protein is Acetyl-CoA carboxylase 1 (ACC1).